The chain runs to 478 residues: 3-isopropylmalate dehydratase large subunit (478 aa).

The [4Fe-4S] cluster site is built by Cys-357, Cys-418, and Cys-421.

This sequence belongs to the aconitase/IPM isomerase family. LeuC type 1 subfamily. Heterodimer of LeuC and LeuD. [4Fe-4S] cluster serves as cofactor.

It catalyses the reaction (2R,3S)-3-isopropylmalate = (2S)-2-isopropylmalate. It functions in the pathway amino-acid biosynthesis; L-leucine biosynthesis; L-leucine from 3-methyl-2-oxobutanoate: step 2/4. Catalyzes the isomerization between 2-isopropylmalate and 3-isopropylmalate, via the formation of 2-isopropylmaleate. The sequence is that of 3-isopropylmalate dehydratase large subunit from Novosphingobium aromaticivorans (strain ATCC 700278 / DSM 12444 / CCUG 56034 / CIP 105152 / NBRC 16084 / F199).